The chain runs to 509 residues: DEAD-box ATP-dependent RNA helicase CshA (509 aa).

The Q motif signature appears at 2–30 (QNFKELGISDKTVQTLEAMGFKEPTPIQK). Residues 33 to 203 (IPYALEGDDI…QQFMKAPKII (171 aa)) enclose the Helicase ATP-binding domain. Position 46-53 (46-53 (AQTGTGKT)) interacts with ATP. The short motif at 150 to 153 (DEAD) is the DEAD box element. The 162-residue stretch at 214-375 (QIDEYYTIVK…LRPPHRKEVL (162 aa)) folds into the Helicase C-terminal domain. Composition is skewed to basic residues over residues 440 to 459 (ARKN…KRGN) and 467 to 482 (RRSK…KKNQ). The tract at residues 440–509 (ARKNRSSKGG…KGRTFADHQK (70 aa)) is disordered. The segment covering 483–492 (KKFDRRDKQQ) has biased composition (basic and acidic residues).

This sequence belongs to the DEAD box helicase family. CshA subfamily. Oligomerizes, may be a member of the RNA degradosome.

The protein resides in the cytoplasm. It carries out the reaction ATP + H2O = ADP + phosphate + H(+). Its function is as follows. DEAD-box RNA helicase possibly involved in RNA degradation. Unwinds dsRNA in both 5'- and 3'-directions, has RNA-dependent ATPase activity. This chain is DEAD-box ATP-dependent RNA helicase CshA, found in Staphylococcus epidermidis (strain ATCC 35984 / DSM 28319 / BCRC 17069 / CCUG 31568 / BM 3577 / RP62A).